The primary structure comprises 393 residues: NAD(P)H-quinone oxidoreductase subunit H, chloroplastic (393 aa).

Belongs to the complex I 49 kDa subunit family. As to quaternary structure, NDH is composed of at least 16 different subunits, 5 of which are encoded in the nucleus.

It is found in the plastid. Its subcellular location is the chloroplast thylakoid membrane. It carries out the reaction a plastoquinone + NADH + (n+1) H(+)(in) = a plastoquinol + NAD(+) + n H(+)(out). The enzyme catalyses a plastoquinone + NADPH + (n+1) H(+)(in) = a plastoquinol + NADP(+) + n H(+)(out). Functionally, NDH shuttles electrons from NAD(P)H:plastoquinone, via FMN and iron-sulfur (Fe-S) centers, to quinones in the photosynthetic chain and possibly in a chloroplast respiratory chain. The immediate electron acceptor for the enzyme in this species is believed to be plastoquinone. Couples the redox reaction to proton translocation, and thus conserves the redox energy in a proton gradient. The protein is NAD(P)H-quinone oxidoreductase subunit H, chloroplastic of Platanus occidentalis (Sycamore).